A 167-amino-acid polypeptide reads, in one-letter code: SsrA-binding protein (167 aa).

Over residues 139-158 (QNHDKRDAAKERDWQRDKQR) the composition is skewed to basic and acidic residues. Residues 139–167 (QNHDKRDAAKERDWQRDKQRVMRRHNRDA) are disordered.

The protein belongs to the SmpB family.

The protein localises to the cytoplasm. Its function is as follows. Required for rescue of stalled ribosomes mediated by trans-translation. Binds to transfer-messenger RNA (tmRNA), required for stable association of tmRNA with ribosomes. tmRNA and SmpB together mimic tRNA shape, replacing the anticodon stem-loop with SmpB. tmRNA is encoded by the ssrA gene; the 2 termini fold to resemble tRNA(Ala) and it encodes a 'tag peptide', a short internal open reading frame. During trans-translation Ala-aminoacylated tmRNA acts like a tRNA, entering the A-site of stalled ribosomes, displacing the stalled mRNA. The ribosome then switches to translate the ORF on the tmRNA; the nascent peptide is terminated with the 'tag peptide' encoded by the tmRNA and targeted for degradation. The ribosome is freed to recommence translation, which seems to be the essential function of trans-translation. The sequence is that of SsrA-binding protein from Xanthomonas oryzae pv. oryzae (strain PXO99A).